The primary structure comprises 1052 residues: N-acetyltransferase eco (1052 aa).

Disordered regions lie at residues 1–45 (METP…DADV), 61–277 (RKGR…SADI), 290–405 (ENMR…RKVT), and 419–452 (SGEA…PLLG). Residues 99 to 113 (TAEQLPQLFTATMRL) are compositionally biased toward polar residues. 2 stretches are compositionally biased toward low complexity: residues 114–125 (NSNSSSNSRNSS) and 138–153 (SSMS…TPSS). A phosphoserine mark is found at serine 176 and serine 177. Residues 290-309 (ENMRSYDEEKTAAVKLENSR) are compositionally biased toward basic and acidic residues. A phosphoserine mark is found at serine 310, serine 312, and serine 314. 3 stretches are compositionally biased toward polar residues: residues 329 to 343 (NTGN…SSEV), 395 to 405 (GSPQSKMRKVT), and 432 to 447 (ISKN…SPTS). The CCHH-type zinc finger occupies 852-876 (RQCQQCGLVYTVHEPEEELLHREYH). The N-acetyltransferase domain occupies 906-1052 (IRINERAPTA…GLDNFLTYDQ (147 aa)).

Belongs to the acetyltransferase family. ECO subfamily.

Its subcellular location is the nucleus. In terms of biological role, acetyltransferase required for the establishment of sister chromatid cohesion and couple the processes of cohesion and DNA replication to ensure that only sister chromatids become paired together. In contrast to the structural cohesins, the deposition and establishment factors are required only during S phase. In Drosophila melanogaster (Fruit fly), this protein is N-acetyltransferase eco (eco).